The chain runs to 270 residues: 4-hydroxy-tetrahydrodipicolinate reductase (270 aa).

NAD(+)-binding positions include 8–13, D34, 102–104, and 128–131; these read GALGRM, GTT, and SQNY. The active-site Proton donor/acceptor is the H160. H161 is a binding site for (S)-2,3,4,5-tetrahydrodipicolinate. Catalysis depends on K164, which acts as the Proton donor. 170–171 contacts (S)-2,3,4,5-tetrahydrodipicolinate; it reads GT.

Belongs to the DapB family.

It is found in the cytoplasm. The enzyme catalyses (S)-2,3,4,5-tetrahydrodipicolinate + NAD(+) + H2O = (2S,4S)-4-hydroxy-2,3,4,5-tetrahydrodipicolinate + NADH + H(+). It carries out the reaction (S)-2,3,4,5-tetrahydrodipicolinate + NADP(+) + H2O = (2S,4S)-4-hydroxy-2,3,4,5-tetrahydrodipicolinate + NADPH + H(+). The protein operates within amino-acid biosynthesis; L-lysine biosynthesis via DAP pathway; (S)-tetrahydrodipicolinate from L-aspartate: step 4/4. Its function is as follows. Catalyzes the conversion of 4-hydroxy-tetrahydrodipicolinate (HTPA) to tetrahydrodipicolinate. The chain is 4-hydroxy-tetrahydrodipicolinate reductase from Methanococcus maripaludis (strain C6 / ATCC BAA-1332).